Here is a 136-residue protein sequence, read N- to C-terminus: uncharacterized protein (136 aa).

It belongs to the MG439/MG440 family.

This is an uncharacterized protein from Mycoplasma pneumoniae (strain ATCC 29342 / M129 / Subtype 1) (Mycoplasmoides pneumoniae).